Consider the following 479-residue polypeptide: Sulfate adenylyltransferase subunit 1 (479 aa).

The 215-residue stretch at 25 to 239 (KSLLRFLTCG…EVLETVDIQR (215 aa)) folds into the tr-type G domain. The segment at 34 to 41 (GSVDDGKS) is G1. A GTP-binding site is contributed by 34-41 (GSVDDGKS). The G2 stretch occupies residues 92-96 (GITID). Residues 113–116 (DTPG) form a G3 region. Residues 113–117 (DTPGH) and 168–171 (NKMD) contribute to the GTP site. Residues 168-171 (NKMD) form a G4 region. The segment at 206–208 (SAL) is G5.

Belongs to the TRAFAC class translation factor GTPase superfamily. Classic translation factor GTPase family. CysN/NodQ subfamily. As to quaternary structure, heterodimer composed of CysD, the smaller subunit, and CysN.

The enzyme catalyses sulfate + ATP + H(+) = adenosine 5'-phosphosulfate + diphosphate. Its pathway is sulfur metabolism; hydrogen sulfide biosynthesis; sulfite from sulfate: step 1/3. In terms of biological role, with CysD forms the ATP sulfurylase (ATPS) that catalyzes the adenylation of sulfate producing adenosine 5'-phosphosulfate (APS) and diphosphate, the first enzymatic step in sulfur assimilation pathway. APS synthesis involves the formation of a high-energy phosphoric-sulfuric acid anhydride bond driven by GTP hydrolysis by CysN coupled to ATP hydrolysis by CysD. This is Sulfate adenylyltransferase subunit 1 from Salmonella typhimurium (strain LT2 / SGSC1412 / ATCC 700720).